A 203-amino-acid polypeptide reads, in one-letter code: Ribosome maturation factor RimP (203 aa).

The disordered stretch occupies residues 179 to 203; that stretch reads VSSEGEDGGEARQAPKLNPKKPGKK.

Belongs to the RimP family.

The protein resides in the cytoplasm. Functionally, required for maturation of 30S ribosomal subunits. The chain is Ribosome maturation factor RimP from Gluconobacter oxydans (strain 621H) (Gluconobacter suboxydans).